We begin with the raw amino-acid sequence, 1046 residues long: Probable inorganic carbon transporter subunit DabA1 (1046 aa).

Positions 462, 464, 721, and 736 each coordinate Zn(2+).

The protein belongs to the inorganic carbon transporter (TC 9.A.2) DabA family. Forms a complex with DabB1. It depends on Zn(2+) as a cofactor.

The protein resides in the cell inner membrane. In terms of biological role, part of an energy-coupled inorganic carbon pump. This Halothiobacillus neapolitanus (strain ATCC 23641 / c2) (Thiobacillus neapolitanus) protein is Probable inorganic carbon transporter subunit DabA1.